We begin with the raw amino-acid sequence, 170 residues long: Ribosome maturation factor RimP (170 aa).

Belongs to the RimP family.

The protein localises to the cytoplasm. Its function is as follows. Required for maturation of 30S ribosomal subunits. In Acidothermus cellulolyticus (strain ATCC 43068 / DSM 8971 / 11B), this protein is Ribosome maturation factor RimP.